Consider the following 239-residue polypeptide: Leucyl/phenylalanyl-tRNA--protein transferase (239 aa).

It belongs to the L/F-transferase family.

The protein resides in the cytoplasm. The catalysed reaction is N-terminal L-lysyl-[protein] + L-leucyl-tRNA(Leu) = N-terminal L-leucyl-L-lysyl-[protein] + tRNA(Leu) + H(+). It catalyses the reaction N-terminal L-arginyl-[protein] + L-leucyl-tRNA(Leu) = N-terminal L-leucyl-L-arginyl-[protein] + tRNA(Leu) + H(+). The enzyme catalyses L-phenylalanyl-tRNA(Phe) + an N-terminal L-alpha-aminoacyl-[protein] = an N-terminal L-phenylalanyl-L-alpha-aminoacyl-[protein] + tRNA(Phe). Functions in the N-end rule pathway of protein degradation where it conjugates Leu, Phe and, less efficiently, Met from aminoacyl-tRNAs to the N-termini of proteins containing an N-terminal arginine or lysine. The polypeptide is Leucyl/phenylalanyl-tRNA--protein transferase (Syntrophus aciditrophicus (strain SB)).